Reading from the N-terminus, the 867-residue chain is Cilium assembly protein DZIP1 (867 aa).

The tract at residues 12–203 is mediates interaction with PCM1; it reads MPFQKHVYYP…KANYYQCHFC (192 aa). Residues 12–367 form a mediates interaction with GLI3 and localization to the cilium basal body region; it reads MPFQKHVYYP…QDFHNVMQLL (356 aa). Residues 154 to 278 are required for interaction with DAZ1; it reads CDGEQSKKLL…SKEYEMQKTK (125 aa). The C2H2-type zinc finger occupies 198 to 221; it reads YQCHFCDKAFMNQAFLQSHIQRRH. Ser226 carries the post-translational modification Phosphoserine; by PLK1. 3 coiled-coil regions span residues 230 to 340, 401 to 445, and 568 to 588; these read YQKN…KSNI, TSMI…FTCN, and DQLHRVLKSVESERHKQEREI. Residues 446–617 are mediates interaction with GDI2 and RAB8A; that stretch reads PLNSISEPKG…EKALLSSDQC (172 aa). 3 stretches are compositionally biased toward polar residues: residues 643 to 654, 671 to 680, and 708 to 718; these read LIRQKAVSTDRT, KSSTITTPPF, and NKGSFGKNTVK. Disordered regions lie at residues 643–768 and 796–867; these read LIRQ…GGTN and SLEE…TSDV. Residues 722–733 show a composition bias toward acidic residues; sequence DGTEGSEIEDTD. Positions 807 to 823 are enriched in basic and acidic residues; it reads SGKEQKEPPPAKNEPHF. Residues 848-859 show a composition bias toward low complexity; it reads SSTLKSSLVTVT.

Belongs to the DZIP C2H2-type zinc-finger protein family. As to quaternary structure, interacts with DAZ1. Interacts with the BBSome; recruits the BBSome to centriolar satellites of the cilium. Interacts with PCM1; localizes DZIP1 and the associated BBSome to centriolar satellites. Interacts with RAB8A (GDP-bound inactive form); recruits RAB8A to the basal body of the cilium and prevents its inhibition by GDI2. Interacts with GDI2; negatively regulates the interaction of GDI2 with GDP-bound RAB8A. Interacts with GLI3; retains GLI3 within the cytoplasm. Interacts with CEP164. Interacts with IFT88. In terms of processing, phosphorylation at Ser-226 by PLK1 before mitosis prevents interaction with PCM1 and localization to centriolar satellites. Thereby, it negatively regulates the localization of the BBSome to centriolar satellites. Predominantly expressed in testis (at protein level). Also expressed in fetal brain, adult oocytes and ovary. Expressed in undifferentiated ES cells. In testis, it is specifically expressed in germ cells (at protein level). Expressed in mature germ cells and secondary spermatocytes, while it is weakly or not expressed in primary spermatocytes.

The protein localises to the cytoplasm. The protein resides in the cytoskeleton. It is found in the cilium basal body. Its subcellular location is the microtubule organizing center. It localises to the centrosome. The protein localises to the centriolar satellite. The protein resides in the centriole. It is found in the nucleus. Its subcellular location is the nucleus speckle. Functionally, molecular adapter that recruits protein complexes required for cilium assembly and function to the cilium basal body. At the exit of mitosis, localizes to the basal body and ciliary base of the forming primary cilium where it recruits and activates RAB8A to direct vesicle-mediated transport of proteins to the cilium. Also recruits the BBSome, a complex involved in cilium biogenesis, by bridging it to PCM1 at the centriolar satellites of the cilium. It is also required for the recruitment to the cilium basal body of the intraflagellar transport (IFT) machinery as well as the ciliary appendage proteins CEP164 and NINEIN. Functions as a regulator of Hedgehog signaling both through its role in cilium assembly but also probably through its ability to retain GLI3 within the cytoplasm. It is involved in spermatogenesis through its role in organization of the basal body and assembly of the sperm flagellum. Also indirectly involved in heart development through its function in ciliogenesis. This Homo sapiens (Human) protein is Cilium assembly protein DZIP1.